Consider the following 531-residue polypeptide: RCC1 and BTB domain-containing protein 1 (531 aa).

6 RCC1 repeats span residues 40–91 (NDEV…LLTT), 93–145 (DGVV…ALAA), 147–198 (GELF…AVLD), 199–250 (SGEV…ALTD), 252–302 (GLLY…AAKT), and 304–356 (GGHV…FLTV). BTB domains are found at residues 370 to 437 (ADLK…DLPP) and 470 to 499 (ENAFSLFSAAVRYDAEDLEEFCFKFCINHL).

As to expression, in the retina, mainly expressed in the inner retina with strong signals reaching up to the outer plexiform layer (at protein level).

The protein resides in the nucleus. Functionally, may be involved in cell cycle regulation by chromatin remodeling. This Mus musculus (Mouse) protein is RCC1 and BTB domain-containing protein 1 (Rcbtb1).